A 314-amino-acid chain; its full sequence is ATP synthase gamma chain (314 aa).

It belongs to the ATPase gamma chain family. F-type ATPases have 2 components, CF(1) - the catalytic core - and CF(0) - the membrane proton channel. CF(1) has five subunits: alpha(3), beta(3), gamma(1), delta(1), epsilon(1). CF(0) has three main subunits: a, b and c.

It is found in the cellular thylakoid membrane. Produces ATP from ADP in the presence of a proton gradient across the membrane. The gamma chain is believed to be important in regulating ATPase activity and the flow of protons through the CF(0) complex. In Synechococcus sp. (strain JA-2-3B'a(2-13)) (Cyanobacteria bacterium Yellowstone B-Prime), this protein is ATP synthase gamma chain.